The following is a 98-amino-acid chain: Aspartyl/glutamyl-tRNA(Asn/Gln) amidotransferase subunit C (98 aa).

Belongs to the GatC family. Heterotrimer of A, B and C subunits.

The catalysed reaction is L-glutamyl-tRNA(Gln) + L-glutamine + ATP + H2O = L-glutaminyl-tRNA(Gln) + L-glutamate + ADP + phosphate + H(+). It catalyses the reaction L-aspartyl-tRNA(Asn) + L-glutamine + ATP + H2O = L-asparaginyl-tRNA(Asn) + L-glutamate + ADP + phosphate + 2 H(+). In terms of biological role, allows the formation of correctly charged Asn-tRNA(Asn) or Gln-tRNA(Gln) through the transamidation of misacylated Asp-tRNA(Asn) or Glu-tRNA(Gln) in organisms which lack either or both of asparaginyl-tRNA or glutaminyl-tRNA synthetases. The reaction takes place in the presence of glutamine and ATP through an activated phospho-Asp-tRNA(Asn) or phospho-Glu-tRNA(Gln). The polypeptide is Aspartyl/glutamyl-tRNA(Asn/Gln) amidotransferase subunit C (Mycobacterium avium (strain 104)).